Consider the following 281-residue polypeptide: 2,3,4,5-tetrahydropyridine-2,6-dicarboxylate N-succinyltransferase (281 aa).

Positions 108 and 145 each coordinate substrate.

It belongs to the transferase hexapeptide repeat family. As to quaternary structure, homotrimer.

It localises to the cytoplasm. The enzyme catalyses (S)-2,3,4,5-tetrahydrodipicolinate + succinyl-CoA + H2O = (S)-2-succinylamino-6-oxoheptanedioate + CoA. The protein operates within amino-acid biosynthesis; L-lysine biosynthesis via DAP pathway; LL-2,6-diaminopimelate from (S)-tetrahydrodipicolinate (succinylase route): step 1/3. This is 2,3,4,5-tetrahydropyridine-2,6-dicarboxylate N-succinyltransferase from Nitrobacter winogradskyi (strain ATCC 25391 / DSM 10237 / CIP 104748 / NCIMB 11846 / Nb-255).